Here is a 401-residue protein sequence, read N- to C-terminus: Large ribosomal subunit protein uL3 (401 aa).

The segment at 1–22 is disordered; the sequence is MSHRKFSAPRHGHMGFTPKKRS.

It belongs to the universal ribosomal protein uL3 family.

The protein resides in the cytoplasm. In terms of biological role, the L3 protein is a component of the large subunit of cytoplasmic ribosomes. In Caenorhabditis elegans, this protein is Large ribosomal subunit protein uL3 (rpl-3).